The primary structure comprises 272 residues: uncharacterized protein (272 aa).

Residue Glu163 is part of the active site.

This sequence belongs to the glycosyl hydrolase 25 family.

This is an uncharacterized protein from Escherichia coli O157:H7.